The following is a 361-amino-acid chain: Ribosomal RNA large subunit methyltransferase M (361 aa).

S-adenosyl-L-methionine is bound by residues Ser-187, 220-223 (CPGG), Asp-239, Asp-259, and Asp-276. Lys-305 serves as the catalytic Proton acceptor.

The protein belongs to the class I-like SAM-binding methyltransferase superfamily. RNA methyltransferase RlmE family. RlmM subfamily. Monomer.

The protein resides in the cytoplasm. The enzyme catalyses cytidine(2498) in 23S rRNA + S-adenosyl-L-methionine = 2'-O-methylcytidine(2498) in 23S rRNA + S-adenosyl-L-homocysteine + H(+). In terms of biological role, catalyzes the 2'-O-methylation at nucleotide C2498 in 23S rRNA. This chain is Ribosomal RNA large subunit methyltransferase M, found in Shewanella sp. (strain W3-18-1).